The chain runs to 744 residues: Phosphoribosylformylglycinamidine synthase subunit PurL (744 aa).

Residue H50 is part of the active site. The ATP site is built by Y53 and K92. E94 serves as a coordination point for Mg(2+). Substrate contacts are provided by residues 95–98 and R117; that span reads SHNH. The Proton acceptor role is filled by H96. A Mg(2+)-binding site is contributed by D118. A substrate-binding site is contributed by Q241. D269 serves as a coordination point for Mg(2+). 313–315 is a binding site for substrate; that stretch reads ESQ. ATP contacts are provided by D494 and G531. N532 is a Mg(2+) binding site. S534 contacts substrate.

The protein belongs to the FGAMS family. Monomer. Part of the FGAM synthase complex composed of 1 PurL, 1 PurQ and 2 PurS subunits.

The protein localises to the cytoplasm. It carries out the reaction N(2)-formyl-N(1)-(5-phospho-beta-D-ribosyl)glycinamide + L-glutamine + ATP + H2O = 2-formamido-N(1)-(5-O-phospho-beta-D-ribosyl)acetamidine + L-glutamate + ADP + phosphate + H(+). It functions in the pathway purine metabolism; IMP biosynthesis via de novo pathway; 5-amino-1-(5-phospho-D-ribosyl)imidazole from N(2)-formyl-N(1)-(5-phospho-D-ribosyl)glycinamide: step 1/2. Part of the phosphoribosylformylglycinamidine synthase complex involved in the purines biosynthetic pathway. Catalyzes the ATP-dependent conversion of formylglycinamide ribonucleotide (FGAR) and glutamine to yield formylglycinamidine ribonucleotide (FGAM) and glutamate. The FGAM synthase complex is composed of three subunits. PurQ produces an ammonia molecule by converting glutamine to glutamate. PurL transfers the ammonia molecule to FGAR to form FGAM in an ATP-dependent manner. PurS interacts with PurQ and PurL and is thought to assist in the transfer of the ammonia molecule from PurQ to PurL. The protein is Phosphoribosylformylglycinamidine synthase subunit PurL of Chelativorans sp. (strain BNC1).